A 474-amino-acid polypeptide reads, in one-letter code: Glutamate--tRNA ligase (474 aa).

The 'HIGH' region motif lies at 11–21; sequence PSPTGFLHIGG. Positions 240-244 match the 'KMSKS' region motif; sequence KLSKR. K243 serves as a coordination point for ATP.

Belongs to the class-I aminoacyl-tRNA synthetase family. Glutamate--tRNA ligase type 1 subfamily. In terms of assembly, monomer.

It localises to the cytoplasm. The enzyme catalyses tRNA(Glu) + L-glutamate + ATP = L-glutamyl-tRNA(Glu) + AMP + diphosphate. Catalyzes the attachment of glutamate to tRNA(Glu) in a two-step reaction: glutamate is first activated by ATP to form Glu-AMP and then transferred to the acceptor end of tRNA(Glu). The sequence is that of Glutamate--tRNA ligase from Bradyrhizobium sp. (strain BTAi1 / ATCC BAA-1182).